We begin with the raw amino-acid sequence, 65 residues long: Hainantoxin-X.2 (65 aa).

An N-terminal signal peptide occupies residues 1–20 (MNVKILVLVAVLCLVVSTHA). The propeptide occupies 21 to 37 (ERHSKTDMEDSPMIQER). 3 cysteine pairs are disulfide-bonded: cysteine 39–cysteine 56, cysteine 46–cysteine 59, and cysteine 55–cysteine 64.

This sequence belongs to the neurotoxin 36 family. 02 subfamily. In terms of tissue distribution, expressed by the venom gland.

Its subcellular location is the secreted. Functionally, reversibly blocks N-type calcium channels (Cav2.2/CACNA1B) in rat dorsal root ganglion cells. Elicits no toxic symptoms in either vertebrates or invertebrates during a period of 48 hours post-injection, when it was assayed in vivo by direct injection into mice and cockroaches. The protein is Hainantoxin-X.2 of Cyriopagopus hainanus (Chinese bird spider).